We begin with the raw amino-acid sequence, 445 residues long: Phosphoglucosamine mutase (445 aa).

The active-site Phosphoserine intermediate is serine 102. Mg(2+)-binding residues include serine 102, aspartate 241, aspartate 243, and aspartate 245. Serine 102 carries the phosphoserine modification.

This sequence belongs to the phosphohexose mutase family. Mg(2+) serves as cofactor. In terms of processing, activated by phosphorylation.

The enzyme catalyses alpha-D-glucosamine 1-phosphate = D-glucosamine 6-phosphate. Its function is as follows. Catalyzes the conversion of glucosamine-6-phosphate to glucosamine-1-phosphate. This chain is Phosphoglucosamine mutase, found in Shewanella denitrificans (strain OS217 / ATCC BAA-1090 / DSM 15013).